A 684-amino-acid polypeptide reads, in one-letter code: Pseudohemocyanin-1 (684 aa).

Positions 1–23 are cleaved as a signal peptide; it reads SLVVAAAAASPYSGSHDFSGFQR. Residues 7-32 form a disordered region; it reads AAASPYSGSHDFSGFQRDEPDGVPTA. N-linked (GlcNAc...) asparagine glycans are attached at residues asparagine 100, asparagine 193, asparagine 230, and asparagine 626.

The protein belongs to the tyrosinase family. Hemocyanin subfamily. Hexamer. Strongly expressed in ovaries. Also expressed in heart. Not detected in hepatopancreas, gills, connective tissue or muscle.

In terms of biological role, does not function as a hemocyanin. The sequence is that of Pseudohemocyanin-1 from Homarus americanus (American lobster).